A 583-amino-acid polypeptide reads, in one-letter code: 1-deoxy-D-xylulose-5-phosphate synthase (583 aa).

Residues histidine 74 and 115–117 (GHS) contribute to the thiamine diphosphate site. Aspartate 146 contacts Mg(2+). Thiamine diphosphate contacts are provided by residues 147–148 (GG), asparagine 175, phenylalanine 244, and glutamate 327. Asparagine 175 contributes to the Mg(2+) binding site.

This sequence belongs to the transketolase family. DXPS subfamily. As to quaternary structure, homodimer. Requires Mg(2+) as cofactor. It depends on thiamine diphosphate as a cofactor.

It catalyses the reaction D-glyceraldehyde 3-phosphate + pyruvate + H(+) = 1-deoxy-D-xylulose 5-phosphate + CO2. It participates in metabolic intermediate biosynthesis; 1-deoxy-D-xylulose 5-phosphate biosynthesis; 1-deoxy-D-xylulose 5-phosphate from D-glyceraldehyde 3-phosphate and pyruvate: step 1/1. In terms of biological role, catalyzes the acyloin condensation reaction between C atoms 2 and 3 of pyruvate and glyceraldehyde 3-phosphate to yield 1-deoxy-D-xylulose-5-phosphate (DXP). The chain is 1-deoxy-D-xylulose-5-phosphate synthase from Myxococcus xanthus (strain DK1622).